The sequence spans 109 residues: Putative double-stranded DNA mimic protein YciU (109 aa).

The protein belongs to the putative dsDNA mimic protein family.

May act as a double-stranded DNA (dsDNA) mimic. Probably regulates the activity of a dsDNA-binding protein. This is Putative double-stranded DNA mimic protein YciU from Salmonella arizonae (strain ATCC BAA-731 / CDC346-86 / RSK2980).